The following is a 156-amino-acid chain: Small ribosomal subunit protein uS7 (156 aa).

It belongs to the universal ribosomal protein uS7 family. Part of the 30S ribosomal subunit. Contacts proteins S9 and S11.

Its function is as follows. One of the primary rRNA binding proteins, it binds directly to 16S rRNA where it nucleates assembly of the head domain of the 30S subunit. Is located at the subunit interface close to the decoding center, probably blocks exit of the E-site tRNA. The chain is Small ribosomal subunit protein uS7 from Arthrospira platensis (Spirulina platensis).